The following is a 365-amino-acid chain: Phosphatidylcholine:ceramide cholinephosphotransferase 2 (365 aa).

Basic and acidic residues predominate over residues 1–14 (MDIIETAKLEEHLE). The segment at 1 to 52 (MDIIETAKLEEHLENQPSDPTNTYTRPTEPVEEENKNGNGKPKSLSSGLRKG) is disordered. The segment covering 15–26 (NQPSDPTNTYTR) has biased composition (polar residues). Transmembrane regions (helical) follow at residues 80–100 (GIAF…ITVV), 128–148 (FSVS…QWLF), 159–179 (FCFI…VTTL), 218–240 (HILC…YLFI), and 248–268 (FWWY…CILV). Residue H229 is part of the active site. Residues H272 and D276 contribute to the active site. The helical transmembrane segment at 273–290 (YTVDVIIAYYITTRLFWW) threads the bilayer. Residues 291–365 (YHSMANEKNL…KIGEDNEKST (75 aa)) are Cytoplasmic-facing. Residues C331, C332, C343, and C348 are each lipidated (S-palmitoyl cysteine).

The protein belongs to the sphingomyelin synthase family. Palmitoylated on Cys-331, Cys-332, Cys-343 and Cys-348; which plays an important role in plasma membrane localization.

It is found in the cell membrane. The protein resides in the golgi apparatus membrane. It carries out the reaction an N-acylsphing-4-enine + a 1,2-diacyl-sn-glycero-3-phosphocholine = a sphingomyelin + a 1,2-diacyl-sn-glycerol. The catalysed reaction is an N-acylsphinganine + a 1,2-diacyl-sn-glycero-3-phosphocholine = an N-acylsphinganine-1-phosphocholine + a 1,2-diacyl-sn-glycerol. It catalyses the reaction an N-acyl-(4R)-4-hydroxysphinganine + a 1,2-diacyl-sn-glycero-3-phosphocholine = an N-acyl-(4R)-4-hydroxysphinganine-phosphocholine + a 1,2-diacyl-sn-glycerol. The enzyme catalyses an N-acylsphing-4-enine + a 1,2-diacyl-sn-glycero-3-phosphoethanolamine = an N-acylsphing-4-enine 1-phosphoethanolamine + a 1,2-diacyl-sn-glycerol. It carries out the reaction an N-acylsphinganine + a 1,2-diacyl-sn-glycero-3-phosphoethanolamine = an N-acylsphinganine-1-phosphoethanolamine + a 1,2-diacyl-sn-glycerol. The catalysed reaction is an N-acyl-(4R)-4-hydroxysphinganine + a 1,2-diacyl-sn-glycero-3-phosphoethanolamine = an N-acyl-(4R)-4-hydroxysphinganine-1-phosphoethanolamine + a 1,2-diacyl-sn-glycerol. It catalyses the reaction 1,2-dihexadecanoyl-sn-glycero-3-phosphocholine + an N-acylsphing-4-enine = 1,2-dihexadecanoyl-sn-glycerol + a sphingomyelin. The enzyme catalyses 1-(9Z-octadecenoyl)-2-acyl-sn-3-glycerol + a sphingomyelin = a 1-(9Z-octadecenoyl)-2-acyl-sn-glycero-3-phosphocholine + an N-acylsphing-4-enine. It carries out the reaction N-hexadecanoylsphinganine + a 1,2-diacyl-sn-glycero-3-phosphocholine = N-hexadecanoyl-sphinganine-1-phosphocholine + a 1,2-diacyl-sn-glycerol. The catalysed reaction is N-hexadecanoyl-(4R)-hydroxysphinganine + a 1,2-diacyl-sn-glycero-3-phosphocholine = N-hexadecanoyl-(4R)-hydroxysphinganine-phosphocholine + a 1,2-diacyl-sn-glycerol. It catalyses the reaction N-hexadecanoylsphinganine + a 1,2-diacyl-sn-glycero-3-phosphoethanolamine = N-hexadecanoyl-sphinganine-1-phosphoethanolamine + a 1,2-diacyl-sn-glycerol. The enzyme catalyses N-hexadecanoyl-(4R)-hydroxysphinganine + a 1,2-diacyl-sn-glycero-3-phosphoethanolamine = N-hexadecanoyl-(4R)-hydroxysphinganine-1-phosphoethanolamine + a 1,2-diacyl-sn-glycerol. The protein operates within sphingolipid metabolism. Its function is as follows. Sphingomyelin synthase that primarily contributes to sphingomyelin synthesis and homeostasis at the plasma membrane. Catalyzes the reversible transfer of phosphocholine moiety in sphingomyelin biosynthesis: in the forward reaction transfers phosphocholine head group of phosphatidylcholine (PC) on to ceramide (CER) to form ceramide phosphocholine (sphingomyelin, SM) and diacylglycerol (DAG) as by-product, and in the reverse reaction transfers phosphocholine from SM to DAG to form PC and CER. The direction of the reaction appears to depend on the levels of CER and DAG in the plasma membrane. Does not use free phosphorylcholine or CDP-choline as donors. Can also transfer phosphoethanolamine head group of phosphatidylethanolamine (PE) on to ceramide (CER) to form ceramide phosphoethanolamine (CPE). Regulates receptor-mediated signal transduction via mitogenic DAG and proapoptotic CER, as well as via SM, a structural component of membrane rafts that serve as platforms for signal transduction and protein sorting. To a lesser extent, plays a role in secretory transport via regulation of DAG pool at the Golgi apparatus and its downstream effects on PRKD1. Required for normal bone matrix mineralization. This is Phosphatidylcholine:ceramide cholinephosphotransferase 2 (SGMS2) from Macaca fascicularis (Crab-eating macaque).